The primary structure comprises 1390 residues: DNA-directed RNA polymerase subunit beta (1390 aa).

Belongs to the RNA polymerase beta chain family. In terms of assembly, the RNAP catalytic core consists of 2 alpha, 1 beta, 1 beta' and 1 omega subunit. When a sigma factor is associated with the core the holoenzyme is formed, which can initiate transcription.

The catalysed reaction is RNA(n) + a ribonucleoside 5'-triphosphate = RNA(n+1) + diphosphate. DNA-dependent RNA polymerase catalyzes the transcription of DNA into RNA using the four ribonucleoside triphosphates as substrates. This Gluconobacter oxydans (strain 621H) (Gluconobacter suboxydans) protein is DNA-directed RNA polymerase subunit beta.